We begin with the raw amino-acid sequence, 759 residues long: Phosphoribosylformylglycinamidine synthase subunit PurL (759 aa).

His46 is an active-site residue. Residues Tyr49 and Lys88 each coordinate ATP. Position 90 (Glu90) interacts with Mg(2+). Residues 91-94 (SHNH) and Arg113 each bind substrate. Residue His92 is the Proton acceptor of the active site. Asp114 provides a ligand contact to Mg(2+). Position 237 (Gln237) interacts with substrate. Asp265 contributes to the Mg(2+) binding site. 309–311 (ESQ) is a substrate binding site. Residues Asp498 and Gly535 each coordinate ATP. Residue Asn536 coordinates Mg(2+). Ser538 serves as a coordination point for substrate.

The protein belongs to the FGAMS family. Monomer. Part of the FGAM synthase complex composed of 1 PurL, 1 PurQ and 2 PurS subunits.

The protein resides in the cytoplasm. It carries out the reaction N(2)-formyl-N(1)-(5-phospho-beta-D-ribosyl)glycinamide + L-glutamine + ATP + H2O = 2-formamido-N(1)-(5-O-phospho-beta-D-ribosyl)acetamidine + L-glutamate + ADP + phosphate + H(+). It participates in purine metabolism; IMP biosynthesis via de novo pathway; 5-amino-1-(5-phospho-D-ribosyl)imidazole from N(2)-formyl-N(1)-(5-phospho-D-ribosyl)glycinamide: step 1/2. In terms of biological role, part of the phosphoribosylformylglycinamidine synthase complex involved in the purines biosynthetic pathway. Catalyzes the ATP-dependent conversion of formylglycinamide ribonucleotide (FGAR) and glutamine to yield formylglycinamidine ribonucleotide (FGAM) and glutamate. The FGAM synthase complex is composed of three subunits. PurQ produces an ammonia molecule by converting glutamine to glutamate. PurL transfers the ammonia molecule to FGAR to form FGAM in an ATP-dependent manner. PurS interacts with PurQ and PurL and is thought to assist in the transfer of the ammonia molecule from PurQ to PurL. The chain is Phosphoribosylformylglycinamidine synthase subunit PurL from Anaeromyxobacter sp. (strain K).